Consider the following 510-residue polypeptide: Histidine ammonia-lyase (510 aa).

A cross-link (5-imidazolinone (Ala-Gly)) is located at residues Ala-143–Gly-145. Ser-144 carries the post-translational modification 2,3-didehydroalanine (Ser).

This sequence belongs to the PAL/histidase family. Contains an active site 4-methylidene-imidazol-5-one (MIO), which is formed autocatalytically by cyclization and dehydration of residues Ala-Ser-Gly.

Its subcellular location is the cytoplasm. It catalyses the reaction L-histidine = trans-urocanate + NH4(+). Its pathway is amino-acid degradation; L-histidine degradation into L-glutamate; N-formimidoyl-L-glutamate from L-histidine: step 1/3. The protein is Histidine ammonia-lyase of Shewanella woodyi (strain ATCC 51908 / MS32).